The following is a 571-amino-acid chain: Proline--tRNA ligase (571 aa).

It belongs to the class-II aminoacyl-tRNA synthetase family. ProS type 1 subfamily. In terms of assembly, homodimer.

It localises to the cytoplasm. It carries out the reaction tRNA(Pro) + L-proline + ATP = L-prolyl-tRNA(Pro) + AMP + diphosphate. Functionally, catalyzes the attachment of proline to tRNA(Pro) in a two-step reaction: proline is first activated by ATP to form Pro-AMP and then transferred to the acceptor end of tRNA(Pro). As ProRS can inadvertently accommodate and process non-cognate amino acids such as alanine and cysteine, to avoid such errors it has two additional distinct editing activities against alanine. One activity is designated as 'pretransfer' editing and involves the tRNA(Pro)-independent hydrolysis of activated Ala-AMP. The other activity is designated 'posttransfer' editing and involves deacylation of mischarged Ala-tRNA(Pro). The misacylated Cys-tRNA(Pro) is not edited by ProRS. The chain is Proline--tRNA ligase from Pseudomonas fluorescens (strain Pf0-1).